Here is a 412-residue protein sequence, read N- to C-terminus: Multifunctional CCA protein (412 aa).

The ATP site is built by glycine 8 and arginine 11. Residues glycine 8 and arginine 11 each contribute to the CTP site. Positions 21 and 23 each coordinate Mg(2+). Arginine 91, arginine 137, and arginine 140 together coordinate ATP. CTP contacts are provided by arginine 91, arginine 137, and arginine 140. The 102-residue stretch at 225-326 (TGIHVMMVID…ADMLQATDAY (102 aa)) folds into the HD domain.

This sequence belongs to the tRNA nucleotidyltransferase/poly(A) polymerase family. Bacterial CCA-adding enzyme type 1 subfamily. Monomer. Can also form homodimers and oligomers. Mg(2+) serves as cofactor. The cofactor is Ni(2+).

It catalyses the reaction a tRNA precursor + 2 CTP + ATP = a tRNA with a 3' CCA end + 3 diphosphate. The enzyme catalyses a tRNA with a 3' CCA end + 2 CTP + ATP = a tRNA with a 3' CCACCA end + 3 diphosphate. In terms of biological role, catalyzes the addition and repair of the essential 3'-terminal CCA sequence in tRNAs without using a nucleic acid template. Adds these three nucleotides in the order of C, C, and A to the tRNA nucleotide-73, using CTP and ATP as substrates and producing inorganic pyrophosphate. tRNA 3'-terminal CCA addition is required both for tRNA processing and repair. Also involved in tRNA surveillance by mediating tandem CCA addition to generate a CCACCA at the 3' terminus of unstable tRNAs. While stable tRNAs receive only 3'-terminal CCA, unstable tRNAs are marked with CCACCA and rapidly degraded. The protein is Multifunctional CCA protein of Nitrosomonas europaea (strain ATCC 19718 / CIP 103999 / KCTC 2705 / NBRC 14298).